Consider the following 507-residue polypeptide: AMSH-like ubiquitin thioesterase 1 (507 aa).

Positions leucine 333–methionine 463 constitute an MPN domain. Zn(2+)-binding residues include histidine 411, histidine 413, aspartate 424, histidine 426, cysteine 469, histidine 475, and histidine 477. Positions histidine 411–aspartate 424 match the JAMM motif motif.

The protein belongs to the peptidase M67C family. Requires Zn(2+) as cofactor.

It localises to the membrane. The protein localises to the cytoplasm. In terms of biological role, zinc metalloprotease that cleaves 'Lys-48'- and 'Lys-63'-linked polyubiquitin chains. This chain is AMSH-like ubiquitin thioesterase 1 (AMSH1), found in Arabidopsis thaliana (Mouse-ear cress).